A 185-amino-acid chain; its full sequence is Ribosome-recycling factor (185 aa).

This sequence belongs to the RRF family.

The protein localises to the cytoplasm. Responsible for the release of ribosomes from messenger RNA at the termination of protein biosynthesis. May increase the efficiency of translation by recycling ribosomes from one round of translation to another. This chain is Ribosome-recycling factor, found in Wolbachia pipientis subsp. Culex pipiens (strain wPip).